The sequence spans 376 residues: AGTVGKVIKCKAAVAWEAGKPLCIEEIEVAPPKAHEVRIKIIATAVCHSDSYTLSGSDSEGLFPVILGHEGAGIVESVGEGVTCVKAGDRVIPLYIPQCGDCNFCLNPKTNLCQKIRVTQGQGLMPDKTSRFTCKGQLLYHYMGTSTFSEYTVVADISVAKIDEAAPLDKVCLLGCGISTGYGAAVNTAKVEPGSTCAVFGLGGVGLAGIMGCKAAGATRIIGVDLNKDKFTKAKEFGATEYINPKDYDKPIQEVLVGLTDGGVDYSFECIGNVKTMRAALEACHKGWGTSVIVGVAPAGHEIATRPFQLVTGRTWKGTAFGGWKSVESVPKLVKEYMAKKLKVDEFVTHTLPFNQINESFELMHAGKSIRCVLSF.

A1 carries the N-acetylalanine modification. Zn(2+)-binding residues include C47, H69, C99, C102, C105, C113, and C176.

This sequence belongs to the zinc-containing alcohol dehydrogenase family. Class-III subfamily. Homodimer. The cofactor is Zn(2+).

Its subcellular location is the cytoplasm. It catalyses the reaction a primary alcohol + NAD(+) = an aldehyde + NADH + H(+). The enzyme catalyses a secondary alcohol + NAD(+) = a ketone + NADH + H(+). The catalysed reaction is S-(hydroxymethyl)glutathione + NADP(+) = S-formylglutathione + NADPH + H(+). It carries out the reaction S-(hydroxymethyl)glutathione + NAD(+) = S-formylglutathione + NADH + H(+). It catalyses the reaction S-nitrosoglutathione + NADH + H(+) = S-(hydroxysulfenamide)glutathione + NAD(+). In terms of biological role, class-III ADH is remarkably ineffective in oxidizing ethanol, but it readily catalyzes the oxidation of long-chain primary alcohols and the oxidation of S-(hydroxymethyl) glutathione. Also acts as a S-nitroso-glutathione reductase by catalyzing the NADH-dependent reduction of S-nitrosoglutathione, thereby regulating protein S-nitrosylation. This is Alcohol dehydrogenase class-3 from Scyliorhinus canicula (Small-spotted catshark).